Reading from the N-terminus, the 289-residue chain is ATP synthase subunit a (289 aa).

6 consecutive transmembrane segments (helical) span residues 43-63, 103-123, 160-180, 193-213, 232-252, and 259-279; these read AFHLDTLGWSVALGLIFLFIF, VIAPLALTIFVWVFLMNAVDL, FCVFALIIFYSIKVKGLGGFI, IFVQILLIPVNFLLEFVTLIA, VFILIAVMFGSGLLWLSGLGV, and AVFHILIITLQAFIFMMLTIV.

It belongs to the ATPase A chain family. F-type ATPases have 2 components, CF(1) - the catalytic core - and CF(0) - the membrane proton channel. CF(1) has five subunits: alpha(3), beta(3), gamma(1), delta(1), epsilon(1). CF(0) has three main subunits: a(1), b(2) and c(9-12). The alpha and beta chains form an alternating ring which encloses part of the gamma chain. CF(1) is attached to CF(0) by a central stalk formed by the gamma and epsilon chains, while a peripheral stalk is formed by the delta and b chains.

The protein resides in the cell inner membrane. Its function is as follows. Key component of the proton channel; it plays a direct role in the translocation of protons across the membrane. In Pseudomonas putida (strain GB-1), this protein is ATP synthase subunit a.